Consider the following 67-residue polypeptide: Nigrocin-2GRc (67 aa).

The N-terminal stretch at 1–22 (MFTMKKSMLLLFFLGTISLSLC) is a signal peptide. A propeptide spanning residues 23–46 (EQERNADEEERRDEEVAKMEEIKR) is cleaved from the precursor. Cys61 and Cys67 are joined by a disulfide.

In terms of tissue distribution, expressed by the skin glands.

Its subcellular location is the secreted. Functionally, antimicrobial peptide active at least against the Gram-positive bacterium S.aureus but with otherwise unclear activity spectrum. Lacks hemolytic activity against rabbit or human erythrocytes. In Odorrana grahami (Yunnanfu frog), this protein is Nigrocin-2GRc.